A 1174-amino-acid polypeptide reads, in one-letter code: ATP-dependent DNA helicase SRS2 (1174 aa).

Residues 14-316 (QLNTQQRAAA…IILVENYRSS (303 aa)) enclose the UvrD-like helicase ATP-binding domain. 38-43 (GTGKTK) contributes to the ATP binding site. The segment at 222–243 (LLMYTFRLLTRVRVLSNIKHVL) is leucine-zipper. Position 314 (R314) interacts with ATP. A UvrD-like helicase C-terminal domain is found at 317–654 (QKILNTSEIL…TISTIHGAKG (338 aa)). The tract at residues 676 to 704 (DDKKDESEEDEEEDQENSKKDASPKKTRV) is disordered. Phosphoserine is present on S833. Disordered stretches follow at residues 865-896 (SKINGNYAPKSRVKSPEKRYAPETTSFHSPTK), 909-973 (NVPS…DKVT), and 994-1024 (ELHPPEYSNKSGQSLTSSEFSGFSSACSNSD). Composition is skewed to polar residues over residues 909–922 (NVPSRQEFHSSTGK) and 935–955 (TDISPRSSTRSLKGASPNKTS). A compositionally biased stretch (basic and acidic residues) spans 956-973 (HMSDDLMRPSPTRKDKVT). The segment covering 1007 to 1023 (SLTSSEFSGFSSACSNS) has biased composition (low complexity).

Belongs to the helicase family. UvrD subfamily.

It is found in the nucleus. It catalyses the reaction Couples ATP hydrolysis with the unwinding of duplex DNA by translocating in the 3'-5' direction.. The enzyme catalyses ATP + H2O = ADP + phosphate + H(+). In terms of biological role, ATP-dependent DNA helicase involved in DNA repair at least for UV-induced lesions. The polarity of the helicase activity was determined to be 3' to 5'. The chain is ATP-dependent DNA helicase SRS2 (SRS2) from Saccharomyces cerevisiae (strain ATCC 204508 / S288c) (Baker's yeast).